Consider the following 512-residue polypeptide: 2,3-bisphosphoglycerate-independent phosphoglycerate mutase (512 aa).

2 residues coordinate Mn(2+): Asp-11 and Ser-61. The active-site Phosphoserine intermediate is the Ser-61. Substrate-binding positions include His-122, 152–153 (RD), Arg-184, Arg-190, 259–262 (RADR), and Lys-332. Positions 399, 403, 440, 441, and 459 each coordinate Mn(2+).

The protein belongs to the BPG-independent phosphoglycerate mutase family. In terms of assembly, monomer. Requires Mn(2+) as cofactor.

The enzyme catalyses (2R)-2-phosphoglycerate = (2R)-3-phosphoglycerate. Its pathway is carbohydrate degradation; glycolysis; pyruvate from D-glyceraldehyde 3-phosphate: step 3/5. Its function is as follows. Catalyzes the interconversion of 2-phosphoglycerate and 3-phosphoglycerate. This Francisella tularensis subsp. tularensis (strain FSC 198) protein is 2,3-bisphosphoglycerate-independent phosphoglycerate mutase.